The primary structure comprises 287 residues: T-cell ecto-ADP-ribosyltransferase 1 (287 aa).

The signal sequence occupies residues 1-20; sequence MPSNNFKFFLTWWLTQQVTG. Disulfide bonds link Cys41-Cys246, Cys80-Cys201, and Cys141-Cys193. The TR mART core domain maps to 61-241; it reads EELKLEWEKA…ISLDSPKRKK (181 aa). Residues Tyr98 and Arg146 each coordinate NAD(+). Residues Arg146 and Ser167 contribute to the active site. The N-linked (GlcNAc...) asparagine glycan is linked to Asn171. Ser202 is a binding site for NAD(+). The active site involves Glu209. A glycan (N-linked (GlcNAc...) asparagine) is linked at Asn256. A lipid anchor (GPI-anchor amidated serine) is attached at Ser258. A propeptide spans 259-287 (removed in mature form); sequence SLGSRESCVSLFLVVLLGLLVQQLTLAEP.

It belongs to the Arg-specific ADP-ribosyltransferase family. In terms of processing, it is proposed that in the absence of reducing agents, a disulfide bond is formed between Cys-80 and Cys-201, leading to a conformational change that reduces the catalytic rate of NAD glycohydrolysis. In terms of tissue distribution, expressed in spleen, intestine and thymus.

It is found in the cell membrane. The catalysed reaction is L-arginyl-[protein] + NAD(+) = N(omega)-(ADP-D-ribosyl)-L-arginyl-[protein] + nicotinamide + H(+). It carries out the reaction NAD(+) + H2O = ADP-D-ribose + nicotinamide + H(+). Its function is as follows. Has both ADP-ribosyltransferase activity and thiol-dependent NAD(+) glycohydrolase activity. The chain is T-cell ecto-ADP-ribosyltransferase 1 (Art2a) from Mus musculus (Mouse).